Here is a 152-residue protein sequence, read N- to C-terminus: Transcriptional repressor NrdR (152 aa).

The segment at 3 to 34 is a zinc-finger region; it reads CCYCGHGESKVLETRSAEEGRVIRRRRECMEC. Residues 49-139 enclose the ATP-cone domain; it reads LIVRKKGGSL…VYRQFTDVGR (91 aa).

It belongs to the NrdR family. The cofactor is Zn(2+).

Its function is as follows. Negatively regulates transcription of bacterial ribonucleotide reductase nrd genes and operons by binding to NrdR-boxes. This chain is Transcriptional repressor NrdR, found in Heliobacterium modesticaldum (strain ATCC 51547 / Ice1).